We begin with the raw amino-acid sequence, 199 residues long: uncharacterized protein (199 aa).

The next 4 helical transmembrane spans lie at 40–60 (LLIC…FCFL), 86–106 (VLTG…TFPF), 117–137 (TSWP…LTSS), and 166–186 (FLLA…ALIL).

Its subcellular location is the membrane. This is an uncharacterized protein from Saccharomyces cerevisiae (strain ATCC 204508 / S288c) (Baker's yeast).